We begin with the raw amino-acid sequence, 479 residues long: Leucine-rich repeat-containing protein 74A (479 aa).

A compositionally biased stretch (acidic residues) spans 1-10 (MDDDDIEPLE). The interval 1 to 29 (MDDDDIEPLEYETKDETEAALAPQSSEDT) is disordered. LRR repeat units follow at residues 119 to 140 (TVLK…SLME), 147 to 167 (YLQE…RIIS), 176 to 197 (SLWK…LLCQ), 204 to 225 (RIRS…YLGQ), 232 to 253 (GLQS…ALCN), 260 to 281 (TLKK…ALGD), 288 to 309 (CLVY…RISK), and 316 to 336 (CLQV…YSLI).

This Rattus norvegicus (Rat) protein is Leucine-rich repeat-containing protein 74A.